Reading from the N-terminus, the 506-residue chain is Histidine--tRNA ligase, mitochondrial (506 aa).

The transit peptide at 1–33 (MHLLGLLPRRAWASLLSQLLRPPWASCTGAVRC) directs the protein to the mitochondrion. A Phosphoserine modification is found at Ser67. L-histidine contacts are provided by residues 131–133 (DLT), Arg158, Gln174, Asp178, Arg327, and 331–332 (YY). Lys444 is subject to N6-acetyllysine.

The protein belongs to the class-II aminoacyl-tRNA synthetase family. Homodimer.

Its subcellular location is the mitochondrion. It catalyses the reaction tRNA(His) + L-histidine + ATP = L-histidyl-tRNA(His) + AMP + diphosphate + H(+). Its function is as follows. Mitochondrial aminoacyl-tRNA synthetase that catalyzes the ATP-dependent ligation of histidine to the 3'-end of its cognate tRNA, via the formation of an aminoacyl-adenylate intermediate (His-AMP). The protein is Histidine--tRNA ligase, mitochondrial (HARS2) of Pongo abelii (Sumatran orangutan).